Consider the following 156-residue polypeptide: V-type proton ATPase 16 kDa proteolipid subunit c (156 aa).

Residues 1-7 are Lumenal-facing; that stretch reads MAENPIY. Residues 8–30 form a helical membrane-spanning segment; sequence GPFFGVMGAASAIIFSALGAAYG. Over 31 to 52 the chain is Cytoplasmic; that stretch reads TAKSGTGIAAMSVMRPELIMKS. A helical membrane pass occupies residues 53-73; sequence IIPVVMAGIIAIYGLVVAVLI. Topologically, residues 74–92 are lumenal; that stretch reads AGSLDAPSNNYTLYKGFIH. Residues 93-114 traverse the membrane as a helical segment; that stretch reads LGAGLAVGFSGLAAGFAIGIVG. At 115 to 126 the chain is on the cytoplasmic side; sequence DAGVRGTAQQPR. Residues 127–152 traverse the membrane as a helical segment; sequence LFVGMILILIFAEVLGLYGLIVAIYL. At 153–156 the chain is on the lumenal side; sequence YTKQ.

The protein belongs to the V-ATPase proteolipid subunit family. V-ATPase is a heteromultimeric enzyme made up of two complexes: the ATP-hydrolytic V1 complex and the proton translocation V0 complex. The V1 complex consists of three catalytic AB heterodimers that form a heterohexamer, three peripheral stalks each consisting of EG heterodimers, one central rotor including subunits D and F, and the regulatory subunits C and H. The proton translocation complex V0 consists of the proton transport subunit a, a ring of proteolipid subunits c9c'', rotary subunit d, subunits e and f, and the accessory subunits VhaAC45 and ATP6AP2.

It is found in the membrane. Proton-conducting pore forming subunit of the V0 complex of vacuolar(H+)-ATPase (V-ATPase), a multisubunit enzyme composed of a peripheral complex (V1) that hydrolyzes ATP and a membrane integral complex (V0) that translocates protons. V-ATPase is responsible for acidifying and maintaining the pH of intracellular compartments and in some cell types, is targeted to the plasma membrane, where it is responsible for acidifying the extracellular environment. The polypeptide is V-type proton ATPase 16 kDa proteolipid subunit c (VHA16) (Heliothis virescens (Tobacco budworm moth)).